The sequence spans 258 residues: Exosome complex component Rrp41 (258 aa).

Belongs to the RNase PH family. Rrp41 subfamily. In terms of assembly, component of the archaeal exosome complex. Forms a hexameric ring-like arrangement composed of 3 Rrp41-Rrp42 heterodimers. The hexameric ring associates with a trimer of Rrp4 and/or Csl4 subunits.

It is found in the cytoplasm. In terms of biological role, catalytic component of the exosome, which is a complex involved in RNA degradation. Has 3'-&gt;5' exoribonuclease activity. Can also synthesize heteromeric RNA-tails. This chain is Exosome complex component Rrp41, found in Archaeoglobus fulgidus (strain ATCC 49558 / DSM 4304 / JCM 9628 / NBRC 100126 / VC-16).